A 438-amino-acid polypeptide reads, in one-letter code: MKTQSLIDCIEMTDSYKRYGKVKRVIGLMIESKGPASSIGDLCLIYAKGQSGKVIKAEVVGFQEENILLMPYLEAASIAPGSIVEATGESLRVKVGTGLIGQVIDAFGEPLDGKLLPKGLSPVSTEQSPPNPMKRPPIREKMGVGVRSIDSLLTVGKGQRIGIFAGSGVGKSTLMGMIAKQTEADLNVIALVGERGREVREFIEKDLGKEGLKRSIVVVATSDQPALMRLKAAYTATAIAEYFRDKGQNVMFMMDSVTRVAMAQREIGLAAGEPPTTKGYTPSVFAILPRLLERTGANEHGTITAFYTVLVDGDDMNEPIADTVRGILDGHIVLDRALANKGQFPAVNVLKSISRVMSNISTKQHLDAANKFRELLSTYQNSEDLINIGAYKRGSSREIDEAIQFYPQLIQFLKQGTDEPALLEESIAALTSLTGNEE.

The segment at 119 to 139 is disordered; the sequence is GLSPVSTEQSPPNPMKRPPIR. An ATP-binding site is contributed by 165–172; that stretch reads AGSGVGKS.

Belongs to the ATPase alpha/beta chains family.

Its subcellular location is the cytoplasm. The enzyme catalyses ATP + H2O + 4 H(+)(in) = ADP + phosphate + 5 H(+)(out). Functionally, probable catalytic subunit of a protein translocase for flagellum-specific export, or a proton translocase involved in local circuits at the flagellum. The polypeptide is Flagellum-specific ATP synthase (fliI) (Bacillus subtilis (strain 168)).